The primary structure comprises 2515 residues: Protein tudor (2515 aa).

Phosphoserine is present on residues Ser-226, Ser-235, and Ser-239. Tudor domains are found at residues Ala-455 to Ile-513 and Gln-641 to Met-696. Ser-800 is subject to Phosphoserine. The interval Gln-840 to Lys-996 is disordered. The span at Ser-890–Ser-900 shows a compositional bias: low complexity. The segment covering Arg-906–Pro-917 has biased composition (polar residues). Residues Arg-918–Lys-927 show a composition bias toward basic and acidic residues. Polar residues-rich tracts occupy residues Gly-943–Pro-954 and Gln-964–Arg-976. The span at Ser-977–Ala-995 shows a compositional bias: low complexity. Tudor domains lie at Gln-1062–Pro-1122 and Lys-1355–His-1414. The disordered stretch occupies residues Glu-1515–Val-1589. Residues Asn-1540 to Glu-1553 show a composition bias toward basic and acidic residues. The span at Ser-1569 to Pro-1584 shows a compositional bias: pro residues. Tudor domains follow at residues Asn-1662 to Glu-1718, Gly-1839 to Ser-1898, Lys-2023 to Pro-2082, Thr-2211 to Ser-2269, and Asp-2392 to Arg-2451.

May form part of a piRNA processing complex consisting of tud, aub and AGO3. Interacts with AGO3 (when symmetrically dimethylated on Arg residues) and aub (when symmetrically dimethylated on Arg residues). Interacts with vls. Interacts with me31B/DDX6 (when symmetrically dimethylated on Arg residues).

Its subcellular location is the cytoplasm. It is found in the perinuclear region. The protein localises to the cytoplasmic ribonucleoprotein granule. Functionally, may act via the Piwi-interacting RNA (piRNA) metabolic process mediated by aub and AGO3 Piwi proteins, which mediates the repression of transposable elements during meiosis by forming complexes composed of piRNAs and Piwi proteins and governs the methylation and subsequent repression of transposons. Required during oogenesis for the formation of primordial germ cells and for normal abdominal segmentation. Not involved in repression of retroelements. The sequence is that of Protein tudor from Drosophila melanogaster (Fruit fly).